Reading from the N-terminus, the 384-residue chain is uncharacterized protein (384 aa).

The tract at residues 1 to 116 (MTEMPKKKFS…FPAAPPPMDS (116 aa)) is disordered. Composition is skewed to basic and acidic residues over residues 14–70 (ARGD…RAGD) and 78–95 (RFKD…DRPR). Residues Gly-318, Ile-338, and Leu-347 each contribute to the S-adenosyl-L-methionine site.

Belongs to the class IV-like SAM-binding methyltransferase superfamily. RNA methyltransferase TrmH family.

This is an uncharacterized protein from Synechocystis sp. (strain ATCC 27184 / PCC 6803 / Kazusa).